We begin with the raw amino-acid sequence, 125 residues long: Large ribosomal subunit protein bL12 (125 aa).

Belongs to the bacterial ribosomal protein bL12 family. In terms of assembly, homodimer. Part of the ribosomal stalk of the 50S ribosomal subunit. Forms a multimeric L10(L12)X complex, where L10 forms an elongated spine to which 2 to 4 L12 dimers bind in a sequential fashion. Binds GTP-bound translation factors.

In terms of biological role, forms part of the ribosomal stalk which helps the ribosome interact with GTP-bound translation factors. Is thus essential for accurate translation. The protein is Large ribosomal subunit protein bL12 of Endomicrobium trichonymphae.